The chain runs to 287 residues: Taxis protein CheF2 (287 aa).

As to quaternary structure, interacts with chemotaxis (Che) proteins as well as flagella accessory (Fla) proteins.

Involved in taxis signal transduction. The protein is Taxis protein CheF2 (cheF2) of Halobacterium salinarum (strain ATCC 29341 / DSM 671 / R1).